A 745-amino-acid chain; its full sequence is Double-stranded RNA-specific editase B2 (745 aa).

Disordered stretches follow at residues 1–35 (MASVLGSGRGSGGLSSQLKCKSKRRRRRRSKRKDK) and 50–104 (SPGT…PLEE). Basic residues predominate over residues 20-34 (CKSKRRRRRRSKRKD). The interval 23–35 (KRRRRRRSKRKDK) is R-domain (ssRNA-binding). DRBM domains follow at residues 125–191 (TPKN…SFVQ) and 283–347 (NPVV…ALFD). The A to I editase domain maps to 414–741 (VLSSGTKCIS…VRKPPEQDQF (328 aa)). Residue H438 coordinates Zn(2+). E440 serves as the catalytic Proton donor. Zn(2+)-binding residues include C496 and C561.

In terms of tissue distribution, brain specific.

Its subcellular location is the nucleus. Functionally, lacks editing activity. It prevents the binding of other ADAR enzymes to targets in vitro, and decreases the efficiency of these enzymes. Capable of binding to dsRNA but also to ssRNA. The sequence is that of Double-stranded RNA-specific editase B2 (Adarb2) from Mus musculus (Mouse).